The chain runs to 914 residues: Isoleucine--tRNA ligase (914 aa).

Positions 57-67 (PYANGQIHMGH) match the 'HIGH' region motif. Glu-554 serves as a coordination point for L-isoleucyl-5'-AMP. A 'KMSKS' region motif is present at residues 595–599 (KMSKS). Residue Lys-598 coordinates ATP. 4 residues coordinate Zn(2+): Cys-883, Cys-886, Cys-904, and Cys-907.

The protein belongs to the class-I aminoacyl-tRNA synthetase family. IleS type 1 subfamily. In terms of assembly, monomer. The cofactor is Zn(2+).

It localises to the cytoplasm. The enzyme catalyses tRNA(Ile) + L-isoleucine + ATP = L-isoleucyl-tRNA(Ile) + AMP + diphosphate. Functionally, catalyzes the attachment of isoleucine to tRNA(Ile). As IleRS can inadvertently accommodate and process structurally similar amino acids such as valine, to avoid such errors it has two additional distinct tRNA(Ile)-dependent editing activities. One activity is designated as 'pretransfer' editing and involves the hydrolysis of activated Val-AMP. The other activity is designated 'posttransfer' editing and involves deacylation of mischarged Val-tRNA(Ile). In Macrococcus caseolyticus (strain JCSC5402) (Macrococcoides caseolyticum), this protein is Isoleucine--tRNA ligase.